The sequence spans 1657 residues: Endoribonuclease Dicer homolog 4 (1657 aa).

Low complexity predominate over residues 1 to 14 (MGDAAAAAPAAAAA). The disordered stretch occupies residues 1 to 26 (MGDAAAAAPAAAAAGPSSTRGEPKDP). The region spanning 37 to 214 (LCKRAVEENI…SHSFTEKGGR (178 aa)) is the Helicase ATP-binding domain. 50-57 (LGTGCGKT) lines the ATP pocket. The DECH box motif lies at 157–160 (DECH). One can recognise a Helicase C-terminal domain in the interval 400-567 (NKFSVLINVL…TSNDMFDCLE (168 aa)). Residues 585 to 675 (SVSLLHCYCD…LPGPGSRKNK (91 aa)) enclose the Dicer dsRNA-binding fold domain. One can recognise a PAZ domain in the interval 856 to 978 (DVSVHASYSS…LPPELCSLKV (123 aa)). 2 RNase III domains span residues 1010–1173 (DVML…VEGG) and 1214–1358 (IAGL…LDSG). Mg(2+)-binding residues include Glu-1252, Asp-1344, and Glu-1347. The DRBM 1 domain occupies 1384–1451 (NPMRELRELC…AQETLSKLKN (68 aa)). The segment at 1525 to 1556 (GSGKHDVNNGRNNQPKLATQSGRLPSEATEKS) is disordered. A compositionally biased stretch (polar residues) spans 1533–1547 (NGRNNQPKLATQSGR). One can recognise a DRBM 2 domain in the interval 1569–1645 (TARSFLFELC…AQGALWCLKQ (77 aa)).

The protein belongs to the helicase family. Dicer subfamily. May interact with ARGONAUTE1 or PINHEAD through their common PAZ domains. Requires Mg(2+) as cofactor. Mn(2+) is required as a cofactor. In terms of tissue distribution, expressed in roots, leaf blades, leaf sheaths, shoot apices and spikelets.

The protein localises to the nucleus. Functionally, involved in the RNA silencing pathway. Cleaves double-stranded RNA to produce small interfering RNAs (siRNAs) which target the selective destruction of complementary RNAs. Required for the production of 21 nucleotide siRNAs. Regulates shoot apical meristem (SAM) initiation and maintenance, leaf polarization and lemma polarity through the trans-acting siRNAS (ta-siRNAs) pathway, which probably modulate the expression of the ARF2, ARF3, ARF4, ARF14 and ARF15 genes. Can process endogenous 21 nucleotide siRNAs derived from an imperfect inverted repeat. May not be involved in microRNAs (miRNAs) production. This Oryza sativa subsp. japonica (Rice) protein is Endoribonuclease Dicer homolog 4 (DCL4).